Consider the following 473-residue polypeptide: Zinc finger and SCAN domain-containing protein 21 (473 aa).

K27 participates in a covalent cross-link: Glycyl lysine isopeptide (Lys-Gly) (interchain with G-Cter in SUMO2). The SCAN box domain maps to 45 to 127 (RQRFRQFGYH…TLLEDLEREL (83 aa)). Residues 127–169 (LDEPGHQVSTPPNEQKPVWEKISSSGTAKESPSSMQPQPLETS) form a disordered region. The segment covering 148 to 167 (ISSSGTAKESPSSMQPQPLE) has biased composition (polar residues). Glycyl lysine isopeptide (Lys-Gly) (interchain with G-Cter in SUMO2) cross-links involve residues K221 and K232. A disordered region spans residues 244-272 (LENEKGTKPPLQEAGSKKGRESVPTKPTP). Positions 258–272 (GSKKGRESVPTKPTP) are enriched in basic and acidic residues. 7 consecutive C2H2-type zinc fingers follow at residues 277-299 (YICAECGKAFSNSSNLTKHRRTH), 305-327 (YVCTKCGKAFSHSSNLTLHYRTH), 333-354 (YDCKCGKAFGQSSDLLKHQRMH), 360-382 (YQCKDCGKAFSGKGSLIRHYRIH), 388-410 (YQCNECGKSFSQHAGLSSHQRLH), 416-438 (YKCKECGKAFNHSSNFNKHHRIH), and 444-466 (YWCHHCGKTFCSKSNLSKHQRVH). A Glycyl lysine isopeptide (Lys-Gly) (interchain with G-Cter in SUMO2) cross-link involves residue K349.

The protein belongs to the krueppel C2H2-type zinc-finger protein family.

The protein resides in the nucleus. Strong transcriptional activator. Plays an important role in spermatogenesis; essential for the progression of meiotic prophase I in spermatocytes. In Homo sapiens (Human), this protein is Zinc finger and SCAN domain-containing protein 21 (ZSCAN21).